The primary structure comprises 755 residues: Serine/threonine-protein kinase GA29083 (755 aa).

Low complexity predominate over residues 18–52 (QASASGSGTPKKTAASSAAAQNSKQLLDQLSQQQK). Residues 18–128 (QASASGSGTP…GSANTNGSAS (111 aa)) are disordered. Basic and acidic residues-rich tracts occupy residues 53-66 (AQEE…RDCD) and 74-84 (EPEKDLDELRD). Residues 87-99 (GSLTGSGSVGKSN) are compositionally biased toward polar residues. The segment covering 100–128 (GSLSGASSTTSAPAGTSTPGSANTNGSAS) has biased composition (low complexity). 2 consecutive Doublecortin domains span residues 157–243 (HRIK…VDYN) and 314–397 (RIVT…VEDF). The 259-residue stretch at 484-742 (YTLSQIIGDG…SEDILDHYWT (259 aa)) folds into the Protein kinase domain. Residues 490 to 498 (IGDGNFAIV) and lysine 513 each bind ATP. Catalysis depends on aspartate 605, which acts as the Proton acceptor.

This sequence belongs to the protein kinase superfamily. CAMK Ser/Thr protein kinase family. CaMK subfamily.

It catalyses the reaction L-seryl-[protein] + ATP = O-phospho-L-seryl-[protein] + ADP + H(+). It carries out the reaction L-threonyl-[protein] + ATP = O-phospho-L-threonyl-[protein] + ADP + H(+). The sequence is that of Serine/threonine-protein kinase GA29083 from Drosophila pseudoobscura pseudoobscura (Fruit fly).